Consider the following 472-residue polypeptide: 2-methylcitrate synthase, mitochondrial (472 aa).

The N-terminal 29 residues, 1-29 (MALNLTTSRRALGSLKPLTRAAFVGARGY), are a transit peptide targeting the mitochondrion. Positions 75 and 193 each coordinate CoA. An oxaloacetate-binding site is contributed by His271. CoA is bound at residue Leu306. His307 is a catalytic residue. Val348, Gly350, and Tyr351 together coordinate CoA. 2 residues coordinate oxaloacetate: His353 and Arg362. The active site involves His353. CoA is bound by residues Thr402, Lys403, and Asn408. The active site involves Asp410. The oxaloacetate site is built by Arg436 and Arg456.

The protein belongs to the citrate synthase family. Homodimer.

It is found in the mitochondrion matrix. It carries out the reaction propanoyl-CoA + oxaloacetate + H2O = (2S,3S)-2-methylcitrate + CoA + H(+). It catalyses the reaction oxaloacetate + acetyl-CoA + H2O = citrate + CoA + H(+). The protein operates within organic acid metabolism; propanoate degradation. In terms of biological role, component of the methylcitrate cycle that catalyzes the synthesis of (2S,3S)-2-methylcitrate from propionyl-CoA and oxaloacetate. Plays an important role in detoxification of propionyl-CoA, an inhibitor of both primary and secondary metabolism. Also has citrate synthase activity using as substrates acetyl-CoA and oxaloacetate. The protein is 2-methylcitrate synthase, mitochondrial of Fusarium solani (Filamentous fungus).